A 302-amino-acid chain; its full sequence is Sulfate adenylyltransferase subunit 2 (302 aa).

Belongs to the PAPS reductase family. CysD subfamily. Heterodimer composed of CysD, the smaller subunit, and CysN.

The enzyme catalyses sulfate + ATP + H(+) = adenosine 5'-phosphosulfate + diphosphate. It functions in the pathway sulfur metabolism; hydrogen sulfide biosynthesis; sulfite from sulfate: step 1/3. With CysN forms the ATP sulfurylase (ATPS) that catalyzes the adenylation of sulfate producing adenosine 5'-phosphosulfate (APS) and diphosphate, the first enzymatic step in sulfur assimilation pathway. APS synthesis involves the formation of a high-energy phosphoric-sulfuric acid anhydride bond driven by GTP hydrolysis by CysN coupled to ATP hydrolysis by CysD. This is Sulfate adenylyltransferase subunit 2 from Escherichia coli O7:K1 (strain IAI39 / ExPEC).